The sequence spans 58 residues: Small ribosomal subunit protein bS21 (58 aa).

Belongs to the bacterial ribosomal protein bS21 family.

In Staphylococcus aureus (strain bovine RF122 / ET3-1), this protein is Small ribosomal subunit protein bS21.